The following is a 570-amino-acid chain: Glycine--tRNA ligase (570 aa).

Substrate-binding residues include Arg99 and Glu165. Residues 197 to 199, 207 to 212, 324 to 325, and 443 to 446 each bind ATP; these read RNE, IRLREF, EC, and GIDR. 212–216 provides a ligand contact to substrate; that stretch reads FTQAE. 439-443 lines the substrate pocket; the sequence is EPSFG.

This sequence belongs to the class-II aminoacyl-tRNA synthetase family.

The protein localises to the cytoplasm. It catalyses the reaction tRNA(Gly) + glycine + ATP = glycyl-tRNA(Gly) + AMP + diphosphate. Its function is as follows. Catalyzes the attachment of glycine to tRNA(Gly). This Pyrococcus horikoshii (strain ATCC 700860 / DSM 12428 / JCM 9974 / NBRC 100139 / OT-3) protein is Glycine--tRNA ligase.